Reading from the N-terminus, the 111-residue chain is WAP four-disulfide core domain protein 12 (111 aa).

An N-terminal signal peptide occupies residues 1–23 (MRSSRFLVLMVSLALVTLVASEG). Residues 27-74 (NTEKPGVCPADNVRCIKSDPPQCHTDQDCQGIRKCCYLHCGFKCVIPV) enclose the WAP domain. 4 disulfides stabilise this stretch: cysteine 34-cysteine 62, cysteine 41-cysteine 66, cysteine 49-cysteine 61, and cysteine 55-cysteine 70.

Its subcellular location is the secreted. Functionally, antibacterial protein. Putative acid-stable proteinase inhibitor. In Saimiri boliviensis boliviensis (Bolivian squirrel monkey), this protein is WAP four-disulfide core domain protein 12 (WFDC12).